The chain runs to 255 residues: MSGNYGKVYLVGSGPGDPELLTLKARRLIDSAEVIVYDQLPGKAILDSMPASAEKINVGKYAGSHTMTQAEINEVLVQKAKEGKMVVRLKGGDPYVFGRGGEEAEVLVAEEIEFEVVPGITSAIAVPAYAGIPVTHRESTSMVTFITGHEDPTKEESGLDWETLAKFGGTIVILMGVKMLGRNAEELMKHGKAPDTPVAVIERGTRADQRVTVGTLANIASLAEERKVKAPAITVVGDVVHLHDILGEQRTGVDF.

Residues P15, 91–93 (GGD), 121–122 (TS), M175, and A232 contribute to the S-adenosyl-L-homocysteine site.

The protein belongs to the precorrin methyltransferase family. As to quaternary structure, homodimer.

It carries out the reaction uroporphyrinogen III + 2 S-adenosyl-L-methionine = precorrin-2 + 2 S-adenosyl-L-homocysteine + H(+). Its pathway is porphyrin-containing compound metabolism; siroheme biosynthesis; precorrin-2 from uroporphyrinogen III: step 1/1. Functionally, involved in the archaeal biosynthesis of heme. Catalyzes the methylation of carbons 2 and 7 of uroporphyrinogen-III (UROGEN) to yield precorrin-2. It does not catalyze the overmethylation of precorrin-2 to trimethylpyrrocorphin. The polypeptide is S-adenosyl-L-methionine-dependent uroporphyrinogen III methyltransferase (Methanosarcina barkeri (strain Fusaro / DSM 804)).